The following is a 113-amino-acid chain: rRNA-processing protein cgrA (113 aa).

Residues 1 to 15 (MSTITTSSVASSNGM) are compositionally biased toward polar residues. The interval 1-113 (MSTITTSSVA…REKRNKLLHS (113 aa)) is disordered. Residues 37–100 (SYEKRLEARK…EKMHRKRVER (64 aa)) are a coiled coil. The span at 38 to 92 (YEKRLEARKLQEAVKEHEREMREEREAERKAQIQKIKDRRAAKEEKERYEKMAEK) shows a compositional bias: basic and acidic residues. A compositionally biased stretch (basic residues) spans 93–113 (MHRKRVERLKRREKRNKLLHS).

The protein belongs to the CGR1 family.

It is found in the nucleus. It localises to the nucleolus. Involved in nucleolar integrity and required for processing of the pre-rRNA for the 60S ribosome subunit. The protein is rRNA-processing protein cgrA (cgrA) of Aspergillus clavatus (strain ATCC 1007 / CBS 513.65 / DSM 816 / NCTC 3887 / NRRL 1 / QM 1276 / 107).